The primary structure comprises 892 residues: Translation initiation factor IF-2 (892 aa).

Residues 88 to 306 (KKRTFVKRDP…LQQGFQKPAQ (219 aa)) are disordered. Basic and acidic residues-rich tracts occupy residues 93 to 159 (VKRD…KDKV) and 166 to 216 (DMIK…EENK). Over residues 254-269 (GRGRNAKAARPAKKGK) the composition is skewed to basic residues. Basic and acidic residues predominate over residues 270–282 (HAESKADREEARA). Positions 391–560 (PRAPVVTIMG…LLQAEVLELK (170 aa)) constitute a tr-type G domain. The tract at residues 400–407 (GHVDHGKT) is G1. 400–407 (GHVDHGKT) is a binding site for GTP. Positions 425 to 429 (GITQH) are G2. Residues 446-449 (DTPG) are G3. GTP is bound by residues 446–450 (DTPGH) and 500–503 (NKID). The interval 500-503 (NKID) is G4. The G5 stretch occupies residues 536–538 (SAK).

Belongs to the TRAFAC class translation factor GTPase superfamily. Classic translation factor GTPase family. IF-2 subfamily.

Its subcellular location is the cytoplasm. In terms of biological role, one of the essential components for the initiation of protein synthesis. Protects formylmethionyl-tRNA from spontaneous hydrolysis and promotes its binding to the 30S ribosomal subunits. Also involved in the hydrolysis of GTP during the formation of the 70S ribosomal complex. The sequence is that of Translation initiation factor IF-2 from Salmonella schwarzengrund (strain CVM19633).